We begin with the raw amino-acid sequence, 64 residues long: Large ribosomal subunit protein bL35 (64 aa).

Belongs to the bacterial ribosomal protein bL35 family.

The polypeptide is Large ribosomal subunit protein bL35 (Wolinella succinogenes (strain ATCC 29543 / DSM 1740 / CCUG 13145 / JCM 31913 / LMG 7466 / NCTC 11488 / FDC 602W) (Vibrio succinogenes)).